Here is a 346-residue protein sequence, read N- to C-terminus: uncharacterized protein (346 aa).

Belongs to the IIV-6 359L family.

This is an uncharacterized protein from Invertebrate iridescent virus 6 (IIV-6).